The sequence spans 671 residues: DNA ligase (671 aa).

NAD(+) is bound by residues 31 to 35, 80 to 81, and glutamate 110; these read DAEYD and SL. The active-site N6-AMP-lysine intermediate is lysine 112. Residues arginine 133, glutamate 167, lysine 283, and lysine 307 each coordinate NAD(+). The Zn(2+) site is built by cysteine 401, cysteine 404, cysteine 419, and cysteine 424. Positions 587–671 constitute a BRCT domain; that stretch reads EEELVFAGKT…YLPDEGGLNE (85 aa).

The protein belongs to the NAD-dependent DNA ligase family. LigA subfamily. Mg(2+) serves as cofactor. It depends on Mn(2+) as a cofactor.

The catalysed reaction is NAD(+) + (deoxyribonucleotide)n-3'-hydroxyl + 5'-phospho-(deoxyribonucleotide)m = (deoxyribonucleotide)n+m + AMP + beta-nicotinamide D-nucleotide.. DNA ligase that catalyzes the formation of phosphodiester linkages between 5'-phosphoryl and 3'-hydroxyl groups in double-stranded DNA using NAD as a coenzyme and as the energy source for the reaction. It is essential for DNA replication and repair of damaged DNA. This Listeria monocytogenes serotype 4b (strain CLIP80459) protein is DNA ligase.